Here is a 163-residue protein sequence, read N- to C-terminus: UPF0478 protein SAB1599c (163 aa).

The chain crosses the membrane as a helical span at residues 7–27; that stretch reads IAGIIAAIAFLILCIGIVAVL.

Belongs to the UPF0478 family.

The protein resides in the cell membrane. This is UPF0478 protein SAB1599c from Staphylococcus aureus (strain bovine RF122 / ET3-1).